The primary structure comprises 402 residues: Beta-peptidyl aminopeptidase BapA (402 aa).

The first 29 residues, 1-29 (MTSTQRLWSGALPLLTALIVSIAATASLA), serve as a signal peptide directing secretion. S279 acts as the Nucleophile in catalysis. Active-site proton donor/acceptor residues include S317 and E319.

It belongs to the peptidase S58 family. In terms of assembly, heterooctamer of 4 heterodimers ((alpha:beta)4); each heterodimer is composed of an alpha subunit and a beta subunit processed from the same precursor. In terms of processing, autoproteolytic processing to generate the alpha and beta subunit is required for self-activation and is proposed to use a similar mechanism as substrate cleavage.

The protein localises to the periplasm. The enzyme catalyses Cleaves N-terminal beta-homoamino acids from peptides composed of 2 to 6 amino acids.. Its activity is regulated as follows. Inhibited by AEBSF (4-(2-aminoethyl)benzenesulfonyl fluoride, Pefabloc SC), ampicillin and AMP(hyd) (ampillicin-derived penicilloic acid). Its function is as follows. Beta-aminopeptidase that can cleave synthetic beta-peptides which consist of backbone-elongated beta-amino acid residues that are not processed by common proteolytic enzymes. Can cleave the beta-peptides beta-homoVal-beta-homoAla-beta-homoLeu and beta-homoAla-beta-homoLeu. Requires a beta-amino acid at the N-terminus of peptide substrates and cleaves the peptide bond between the N-terminal beta-amino acid and the amino acid at the second position of tripeptidic substrates of the general structure H-betahXaa-Ile-betahTyr-OH according to the following preferences with regard to the side chain of the N-terminal beta-amino acid: aliphatic and aromatic &gt; OH-containing &gt; hydrogen, basic and polar. This chain is Beta-peptidyl aminopeptidase BapA, found in Sphingosinicella xenopeptidilytica.